Consider the following 1420-residue polypeptide: Mediator of RNA polymerase II transcription subunit 13 (1420 aa).

Residues S370, S375, and S425 each carry the phosphoserine modification. Residues 416 to 427 are compositionally biased toward polar residues; sequence TTVSNDLENSPL. The tract at residues 416 to 511 is disordered; sequence TTVSNDLENS…TNESNKSISD (96 aa). Residues 429–439 are compositionally biased toward basic and acidic residues; it reads TELEANGRSLE. Polar residues predominate over residues 440-453; it reads KVNNSVSKTGSVDT. Residues 454–484 are compositionally biased toward basic and acidic residues; the sequence is LHNKEGTLEQREQNENLPSDKSDSMVDKELF. The segment covering 494-508 has biased composition (low complexity); it reads GDSNKSNSTNESNKS. T601 bears the Phosphothreonine mark. At S608 the chain carries Phosphoserine; by PKA. A Phosphoserine modification is found at S636. Residues 653–691 are disordered; sequence LSSSEEEEDEEENGSSDEDLKSLNVRDDMKPSDNISTNT. The span at 655–669 shows a compositional bias: acidic residues; the sequence is SSEEEEDEEENGSSD. Residues 670–683 show a composition bias toward basic and acidic residues; sequence EDLKSLNVRDDMKP. At S748 the chain carries Phosphoserine.

It belongs to the Mediator complex subunit 13 family. Component of the SRB8-11 complex which consists of SRB8, SSN2/SRB9, SSN3/SRB10 and SSN8/SRB11. The SRB8-11 complex associates with the Mediator complex. The SSN3/SRB10 and SSN8/SRB11 kinase-cyclin pair also associate with the RNA polymerase II holoenzyme. Post-translationally, phosphorylated. PKA-dependent phosphorylation at 'Ser-608' is enhanced by activation of the RAS signaling pathway.

Its subcellular location is the nucleus. Component of the SRB8-11 complex. The SRB8-11 complex is a regulatory module of the Mediator complex which is itself involved in regulation of basal and activated RNA polymerase II-dependent transcription. The SRB8-11 complex may be involved in the transcriptional repression of a subset of genes regulated by Mediator. It may inhibit the association of the Mediator complex with RNA polymerase II to form the holoenzyme complex. The SRB8-11 complex phosphorylates the C-terminal domain (CTD) of the largest subunit of RNA polymerase II RPB1 at serines 2 and 5. The chain is Mediator of RNA polymerase II transcription subunit 13 (SSN2) from Saccharomyces cerevisiae (strain ATCC 204508 / S288c) (Baker's yeast).